A 257-amino-acid chain; its full sequence is Protein YIPF5 (257 aa).

Topologically, residues 1-124 (MSGFDNLNSG…RAADGSIMNE (124 aa)) are cytoplasmic. An interaction with Sec23 region spans residues 75–106 (PTTPQPFYGDSFEEEPPLLEELGINFDHIWQK). A helical membrane pass occupies residues 125–145 (TDLAGPVVFCLAFGATLLLAG). A topological domain (lumenal) is located at residue Lys-146. Residues 147 to 167 (IQFGYVYGISAIGCLGMFCLL) traverse the membrane as a helical segment. At 168 to 173 (NLMSMT) the chain is on the cytoplasmic side. The helical transmembrane segment at 174–194 (GVSFGCVASVLGYCLLPMILL) threads the bilayer. Topologically, residues 195-196 (SS) are lumenal. The helical transmembrane segment at 197–217 (FAVVFSLQGMVGILLTATIIG) threads the bilayer. Topologically, residues 218–236 (WCSFSASKIFISALAMDGQ) are cytoplasmic. A helical membrane pass occupies residues 237–257 (QLLVAYPCALLYGVFALISVF).

The protein belongs to the YIP1 family. Interacts with the COPII coat components Sec23 (SEC23A and/or SEC23B) and Sec24 (SEC24A and/or SEC24B). Interacts with YIF1A. May interact with RAB1A. Interacts with YIPF3 and YIPF4. In terms of tissue distribution, ubiquitously expressed.

The protein localises to the golgi apparatus. The protein resides in the cis-Golgi network membrane. It localises to the cytoplasmic vesicle. It is found in the COPII-coated vesicle. Its subcellular location is the endoplasmic reticulum membrane. In terms of biological role, plays a role in transport between endoplasmic reticulum and Golgi. In pancreatic beta cells, required to transport proinsulin from endoplasmic reticulum into the Golgi. This Mus musculus (Mouse) protein is Protein YIPF5.